The following is a 246-amino-acid chain: Probable transcriptional regulatory protein NT01CX_1819 (246 aa).

It belongs to the TACO1 family.

The protein localises to the cytoplasm. This Clostridium novyi (strain NT) protein is Probable transcriptional regulatory protein NT01CX_1819.